The sequence spans 451 residues: Probable D-serine dehydratase (451 aa).

The segment at 1–55 (MPGRTRPSCRLAITFTPRPDSATPRAGRAAPATGRRSNRSRSTLSATASPMPRRP) is disordered. Low complexity predominate over residues 22–35 (ATPRAGRAAPATGR). Lysine 118 carries the post-translational modification N6-(pyridoxal phosphate)lysine.

This sequence belongs to the serine/threonine dehydratase family. DsdA subfamily. The cofactor is pyridoxal 5'-phosphate.

The enzyme catalyses D-serine = pyruvate + NH4(+). The sequence is that of Probable D-serine dehydratase from Paracidovorax citrulli (strain AAC00-1) (Acidovorax citrulli).